The following is a 140-amino-acid chain: Transcriptional regulator YdaT (140 aa).

Transcriptional regulator that causes a severe detrimental growth effect and reduces cell viability. When expressed, it alters expression of a variety of bacterial regulons normally controlled by the transcriptional regulatory protein RcsA, resulting in deficient lipopolysaccharide biosynthesis and cell division. YdaT has no effect on Rac prophage excision. Overexpression of ydaST reduces growth and leads to loss of cell viability. May contribute to toxicity and morphological defects. This is Transcriptional regulator YdaT (ydaT) from Escherichia coli (strain K12).